Here is a 293-residue protein sequence, read N- to C-terminus: Nucleotide-binding protein Dole_0503 (293 aa).

11 to 18 is an ATP binding site; that stretch reads GLSGSGKS. 62–65 is a binding site for GTP; that stretch reads DLRE.

Belongs to the RapZ-like family.

In terms of biological role, displays ATPase and GTPase activities. The chain is Nucleotide-binding protein Dole_0503 from Desulfosudis oleivorans (strain DSM 6200 / JCM 39069 / Hxd3) (Desulfococcus oleovorans).